Reading from the N-terminus, the 247-residue chain is uncharacterized protein (247 aa).

The N-acetyltransferase domain occupies 70–205 (ISLWMGPGNN…QKVPLEIMIR (136 aa)).

The protein belongs to the acetyltransferase family.

It localises to the endoplasmic reticulum. The protein localises to the golgi apparatus. Its subcellular location is the vacuole. This is an uncharacterized protein from Schizosaccharomyces pombe (strain 972 / ATCC 24843) (Fission yeast).